We begin with the raw amino-acid sequence, 158 residues long: NADH-quinone oxidoreductase subunit B (158 aa).

[4Fe-4S] cluster contacts are provided by C37, C38, C102, and C132.

This sequence belongs to the complex I 20 kDa subunit family. In terms of assembly, NDH-1 is composed of 14 different subunits. Subunits NuoB, C, D, E, F, and G constitute the peripheral sector of the complex. [4Fe-4S] cluster serves as cofactor.

It is found in the cell inner membrane. It carries out the reaction a quinone + NADH + 5 H(+)(in) = a quinol + NAD(+) + 4 H(+)(out). Its function is as follows. NDH-1 shuttles electrons from NADH, via FMN and iron-sulfur (Fe-S) centers, to quinones in the respiratory chain. Couples the redox reaction to proton translocation (for every two electrons transferred, four hydrogen ions are translocated across the cytoplasmic membrane), and thus conserves the redox energy in a proton gradient. The protein is NADH-quinone oxidoreductase subunit B of Bordetella petrii (strain ATCC BAA-461 / DSM 12804 / CCUG 43448).